Reading from the N-terminus, the 569-residue chain is Urease subunit alpha (569 aa).

One can recognise a Urease domain in the interval 131-569; it reads GGIDTHIHFI…LPLAQRYLLL (439 aa). Ni(2+) is bound by residues His136, His138, and Lys219. Residue Lys219 is modified to N6-carboxylysine. Residue His221 participates in substrate binding. Ni(2+)-binding residues include His248 and His274. The active-site Proton donor is the His322. Asp362 lines the Ni(2+) pocket.

It belongs to the metallo-dependent hydrolases superfamily. Urease alpha subunit family. As to quaternary structure, heterotrimer of UreA (gamma), UreB (beta) and UreC (alpha) subunits. Three heterotrimers associate to form the active enzyme. Ni cation serves as cofactor. In terms of processing, carboxylation allows a single lysine to coordinate two nickel ions.

The protein localises to the cytoplasm. It catalyses the reaction urea + 2 H2O + H(+) = hydrogencarbonate + 2 NH4(+). It participates in nitrogen metabolism; urea degradation; CO(2) and NH(3) from urea (urease route): step 1/1. The polypeptide is Urease subunit alpha (Synechococcus sp. (strain CC9311)).